Reading from the N-terminus, the 177-residue chain is METHATTILAVRKDGIVALAGDGQVTMGQTMIMKHAAQKVRRLHDGKILAGFAGATADAFTLFELFESKLKEVRGHMVRAAVEMTKDWRKDKYLRKLEAMLLLADREHILVLSGTGDVIEPDDNVAAIGSGGPYALAAARALSRHSGLDAETIARESMRIAAEICVYTNDHVTLETL.

The active site involves T6. The Na(+) site is built by A162, C165, and T168.

This sequence belongs to the peptidase T1B family. HslV subfamily. In terms of assembly, a double ring-shaped homohexamer of HslV is capped on each side by a ring-shaped HslU homohexamer. The assembly of the HslU/HslV complex is dependent on binding of ATP.

It localises to the cytoplasm. It catalyses the reaction ATP-dependent cleavage of peptide bonds with broad specificity.. Allosterically activated by HslU binding. Functionally, protease subunit of a proteasome-like degradation complex believed to be a general protein degrading machinery. This Desulfovibrio desulfuricans (strain ATCC 27774 / DSM 6949 / MB) protein is ATP-dependent protease subunit HslV.